Reading from the N-terminus, the 214-residue chain is MEIFLDTANIEEIKKGASLGIISGVTTNPSLIAREGRDLKEVVMEIVSLIDGPISAEVISLDYEGMVREAEELSKLHPNITIKIPMTWDGIRAVKTLSSMGIKTNVTLVFSANQALLAALAGATFVSPFVGRLDDTGHDGVYLIEEIKTIYENYNFKTKIIAASIRHPLHVTQVAKAGADIATVPFKVLTQMFAHPQTKEGIEKFLADWQAMKR.

Catalysis depends on Lys83, which acts as the Schiff-base intermediate with substrate.

It belongs to the transaldolase family. Type 3B subfamily.

Its subcellular location is the cytoplasm. It catalyses the reaction D-sedoheptulose 7-phosphate + D-glyceraldehyde 3-phosphate = D-erythrose 4-phosphate + beta-D-fructose 6-phosphate. The protein operates within carbohydrate degradation; pentose phosphate pathway; D-glyceraldehyde 3-phosphate and beta-D-fructose 6-phosphate from D-ribose 5-phosphate and D-xylulose 5-phosphate (non-oxidative stage): step 2/3. Functionally, transaldolase is important for the balance of metabolites in the pentose-phosphate pathway. The chain is Probable transaldolase from Carboxydothermus hydrogenoformans (strain ATCC BAA-161 / DSM 6008 / Z-2901).